The primary structure comprises 311 residues: Aspartate carbamoyltransferase catalytic subunit (311 aa).

2 residues coordinate carbamoyl phosphate: Arg59 and Thr60. Residue Lys87 participates in L-aspartate binding. Arg109, His139, and Gln142 together coordinate carbamoyl phosphate. 2 residues coordinate L-aspartate: Arg172 and Arg224. Residues Ala265 and Pro266 each contribute to the carbamoyl phosphate site.

It belongs to the aspartate/ornithine carbamoyltransferase superfamily. ATCase family. Heterododecamer (2C3:3R2) of six catalytic PyrB chains organized as two trimers (C3), and six regulatory PyrI chains organized as three dimers (R2).

The catalysed reaction is carbamoyl phosphate + L-aspartate = N-carbamoyl-L-aspartate + phosphate + H(+). It functions in the pathway pyrimidine metabolism; UMP biosynthesis via de novo pathway; (S)-dihydroorotate from bicarbonate: step 2/3. Functionally, catalyzes the condensation of carbamoyl phosphate and aspartate to form carbamoyl aspartate and inorganic phosphate, the committed step in the de novo pyrimidine nucleotide biosynthesis pathway. The sequence is that of Aspartate carbamoyltransferase catalytic subunit from Streptococcus pyogenes serotype M4 (strain MGAS10750).